The sequence spans 268 residues: ClpXP adapter protein SpxH (268 aa).

The protein belongs to the SpxH family. As to quaternary structure, interacts with Spx.

Its subcellular location is the cytoplasm. Its function is as follows. Adapter protein required for efficient degradation of Spx by ClpXP under non-stress conditions. Interaction with Spx stabilizes Spx and exposes the C-terminus of Spx for recognition and proteolysis by ClpXP. The polypeptide is ClpXP adapter protein SpxH (Staphylococcus aureus (strain COL)).